The sequence spans 430 residues: ATP-dependent RNA helicase cgh-1 (430 aa).

Positions 43-71 (VEFEDFCLGRDLLMGIFEKGWEKPSPIQE) match the Q motif motif. Residues 74 to 244 (IGVALTGQDI…QKHMHKPYEI (171 aa)) enclose the Helicase ATP-binding domain. 87-94 (AKNGTGKT) is a binding site for ATP. The DEAD box motif lies at 192-195 (DEAD). Residues 254 to 414 (GVTQYYAFVQ…PIPKTVDPKL (161 aa)) form the Helicase C-terminal domain.

Belongs to the DEAD box helicase family. DDX6/DHH1 subfamily. In terms of assembly, interacts with car-1 in a germline ribonucleoprotein complex. Interacts with ifet-1. Interacts with oma-1, which is a component of a ribonucleoprotein complex, in an RNA-dependent manner. In terms of tissue distribution, expression is restricted to two germline precursors Z2 and Z3 in L1 stage hermaphrodites, and is detectable specifically in the gonad at low levels into the L3 stage. Expression is significantly higher during the early L4 stage. In adults, expression remains gonad-specific and was not apparent in the somatically derived uterus. Expressed in germ granules (P granules); when associated with pgl-1.

It localises to the cytoplasm. It catalyses the reaction ATP + H2O = ADP + phosphate + H(+). Its function is as follows. Probable RNA helicase required for oocyte and sperm function. Also required to prevent the physiological germline apoptosis mechanism killing essentially all developing oocytes. This is ATP-dependent RNA helicase cgh-1 (cgh-1) from Caenorhabditis elegans.